The sequence spans 95 residues: Small ribosomal subunit protein bS6 (95 aa).

Belongs to the bacterial ribosomal protein bS6 family.

In terms of biological role, binds together with bS18 to 16S ribosomal RNA. The protein is Small ribosomal subunit protein bS6 of Shouchella clausii (strain KSM-K16) (Alkalihalobacillus clausii).